The chain runs to 338 residues: Large ribosomal subunit protein uL3 (338 aa).

Disordered stretches follow at residues 230–256 (HRKGHRRTGTIGPQAPALMFTQPRPGQ) and 315–338 (PARPPRRAPPTTEPQVVWVSSQQP).

Belongs to the universal ribosomal protein uL3 family. As to quaternary structure, part of the 50S ribosomal subunit. Forms a cluster with proteins L14 and L24e.

Functionally, one of the primary rRNA binding proteins, it binds directly near the 3'-end of the 23S rRNA, where it nucleates assembly of the 50S subunit. The sequence is that of Large ribosomal subunit protein uL3 from Pyrobaculum arsenaticum (strain DSM 13514 / JCM 11321 / PZ6).